We begin with the raw amino-acid sequence, 443 residues long: Transcription factor E2F2 (443 aa).

The tract at residues 1–22 (MLRAPRTLAPATAQPTKSLPAL) is disordered. Residues 67-107 (ATPHGPEGQIVRCAPAGRLPAKRKLDLEGIGRPTVPEFRTP) are cyclin A/CDK2 binding. The DNA-binding element occupies 109 to 198 (GKCIRVDGLP…KNNIQWVGRE (90 aa)). The tract at residues 157–178 (LNWAAEVLDVQKRRIYDITNVL) is leucine-zipper. A DEF box motif is present at residues 162-198 (EVLDVQKRRIYDITNVLEGIQLIRKKSKNNIQWVGRE). Residues 199–291 (LFEDPTRPSR…PDRAEENLQI (93 aa)) are dimerization. Residues 306–341 (PEEGQEPDSPAKEALPSTSALSPIPDCAQPGCSTDS) are disordered. The transactivation stretch occupies residues 361–443 (PPPPLPPAPS…SYDLGDLLIN (83 aa)). The tract at residues 416–433 (DEYLWGMDEGEGISDLFD) is retinoblastoma protein binding.

Belongs to the E2F/DP family. Component of the DRTF1/E2F transcription factor complex. Forms heterodimers with DP family members. The E2F2 complex binds specifically hypophosphorylated retinoblastoma protein RB1. During the cell cycle, RB1 becomes phosphorylated in mid-to-late G1 phase, detaches from the DRTF1/E2F complex, rendering E2F transcriptionally active. Viral oncoproteins, notably E1A, T-antigen and HPV E7, are capable of sequestering RB protein, thus releasing the active complex. Binds EAPP. Phosphorylated by CDK2 and cyclin A-CDK2 in the S-phase.

The protein localises to the nucleus. In terms of biological role, transcription activator that binds DNA cooperatively with DP proteins through the E2 recognition site, 5'-TTTC[CG]CGC-3' found in the promoter region of a number of genes whose products are involved in cell cycle regulation or in DNA replication. The DRTF1/E2F complex functions in the control of cell-cycle progression from g1 to s phase. E2F2 binds specifically to RB1 in a cell-cycle dependent manner. The polypeptide is Transcription factor E2F2 (E2f2) (Mus musculus (Mouse)).